A 935-amino-acid polypeptide reads, in one-letter code: Isoleucine--tRNA ligase (935 aa).

A 'HIGH' region motif is present at residues 58 to 68 (PYANGSIHVGH). Glu558 contacts L-isoleucyl-5'-AMP. Residues 599-603 (KMSKS) carry the 'KMSKS' region motif. ATP is bound at residue Lys602. The Zn(2+) site is built by Cys897, Cys900, Cys917, and Cys920.

This sequence belongs to the class-I aminoacyl-tRNA synthetase family. IleS type 1 subfamily. Monomer. It depends on Zn(2+) as a cofactor.

It localises to the cytoplasm. The enzyme catalyses tRNA(Ile) + L-isoleucine + ATP = L-isoleucyl-tRNA(Ile) + AMP + diphosphate. Its function is as follows. Catalyzes the attachment of isoleucine to tRNA(Ile). As IleRS can inadvertently accommodate and process structurally similar amino acids such as valine, to avoid such errors it has two additional distinct tRNA(Ile)-dependent editing activities. One activity is designated as 'pretransfer' editing and involves the hydrolysis of activated Val-AMP. The other activity is designated 'posttransfer' editing and involves deacylation of mischarged Val-tRNA(Ile). This chain is Isoleucine--tRNA ligase, found in Francisella tularensis subsp. novicida (strain U112).